A 417-amino-acid polypeptide reads, in one-letter code: Serine hydroxymethyltransferase (417 aa).

(6S)-5,6,7,8-tetrahydrofolate contacts are provided by residues leucine 121 and 125-127 (GHL). At lysine 230 the chain carries N6-(pyridoxal phosphate)lysine. Residue 355-357 (SPF) coordinates (6S)-5,6,7,8-tetrahydrofolate.

The protein belongs to the SHMT family. As to quaternary structure, homodimer. It depends on pyridoxal 5'-phosphate as a cofactor.

Its subcellular location is the cytoplasm. The catalysed reaction is (6R)-5,10-methylene-5,6,7,8-tetrahydrofolate + glycine + H2O = (6S)-5,6,7,8-tetrahydrofolate + L-serine. The protein operates within one-carbon metabolism; tetrahydrofolate interconversion. It functions in the pathway amino-acid biosynthesis; glycine biosynthesis; glycine from L-serine: step 1/1. Functionally, catalyzes the reversible interconversion of serine and glycine with tetrahydrofolate (THF) serving as the one-carbon carrier. This reaction serves as the major source of one-carbon groups required for the biosynthesis of purines, thymidylate, methionine, and other important biomolecules. Also exhibits THF-independent aldolase activity toward beta-hydroxyamino acids, producing glycine and aldehydes, via a retro-aldol mechanism. This chain is Serine hydroxymethyltransferase, found in Marinobacter nauticus (strain ATCC 700491 / DSM 11845 / VT8) (Marinobacter aquaeolei).